The chain runs to 141 residues: Large ribosomal subunit protein uL23B (141 aa).

Residues 1 to 22 are disordered; it reads MSVGKAKGAQKTVQKGIHNKVA.

The protein belongs to the universal ribosomal protein uL23 family. As to quaternary structure, component of the large ribosomal subunit (LSU). Mature yeast ribosomes consist of a small (40S) and a large (60S) subunit. The 40S small subunit contains 1 molecule of ribosomal RNA (18S rRNA) and at least 33 different proteins. The large 60S subunit contains 3 rRNA molecules (25S, 5.8S and 5S rRNA) and at least 46 different proteins. uL23 is associated with the polypeptide exit tunnel.

The protein localises to the cytoplasm. Functionally, this protein binds to a specific region on the 26S rRNA. Component of the ribosome, a large ribonucleoprotein complex responsible for the synthesis of proteins in the cell. The small ribosomal subunit (SSU) binds messenger RNAs (mRNAs) and translates the encoded message by selecting cognate aminoacyl-transfer RNA (tRNA) molecules. The large subunit (LSU) contains the ribosomal catalytic site termed the peptidyl transferase center (PTC), which catalyzes the formation of peptide bonds, thereby polymerizing the amino acids delivered by tRNAs into a polypeptide chain. The nascent polypeptides leave the ribosome through a tunnel in the LSU and interact with protein factors that function in enzymatic processing, targeting, and the membrane insertion of nascent chains at the exit of the ribosomal tunnel. uL23 is a major component of the universal docking site for these factors at the polypeptide exit tunnel. In Schizosaccharomyces pombe (strain 972 / ATCC 24843) (Fission yeast), this protein is Large ribosomal subunit protein uL23B (rpl2502).